Reading from the N-terminus, the 537-residue chain is Putative cysteine ligase BshC (537 aa).

The stretch at 422 to 450 forms a coiled coil; the sequence is IEKVEGMIEQQRRLNQDLLDEVAGNQNNI.

Belongs to the BshC family.

Functionally, involved in bacillithiol (BSH) biosynthesis. May catalyze the last step of the pathway, the addition of cysteine to glucosamine malate (GlcN-Mal) to generate BSH. The protein is Putative cysteine ligase BshC of Staphylococcus aureus (strain bovine RF122 / ET3-1).